The sequence spans 22 residues: Conotoxin MIIIJ (22 aa).

Pyrrolidone carboxylic acid is present on Q1. 3 cysteine pairs are disulfide-bonded: C3-C21, C4-C19, and C9-C22.

Belongs to the conotoxin M superfamily. In terms of tissue distribution, expressed by the venom duct.

The protein resides in the secreted. Probable competitive antagonist of fish muscle acetylcholine receptor. Inhibits postsynaptic nicotinic acetylcholine receptors (nAChRs) from fish (zebrafish and goldfish) and frogs (IC(50)=0.1 uM). Protects these receptors from block by alpha-bungarotoxin and alpha-conotoxin EI. Does not block nAChRs at the neuromuscular junction of Rana pipiens. Shows a weak inhibition on mammalian adult and fetal muscle nAChRs (alpha-1-beta-1-delta-epsilon/CHRNA1-CHRNB1-CHRND-CHRNE and alpha-1 beta-1 gamma delta/CHRNA1-CHRNB1-CHRNG-CHRND) (IC(50)=3-45 uM). In vivo, induces paralysis in goldfish (Carassius auratus) but not mice. The protein is Conotoxin MIIIJ of Conus magus (Magical cone).